A 128-amino-acid polypeptide reads, in one-letter code: MCSGVCICLLLAMLSASSKAHQATGSLGEDAVGTEMDQLNLSQLPRYARASSAGQKKSFQRTDGDQRSNIGNALVKYLQQSRKAGPSGRYVVLPNRPIFDQSHRINDRDYMGWMDFGRRSAEEYEYSS.

The first 20 residues, 1 to 20 (MCSGVCICLLLAMLSASSKA), serve as a signal peptide directing secretion. Residues 21–108 (HQATGSLGED…FDQSHRINDR (88 aa)) constitute a propeptide that is removed on maturation. The segment at 47-67 (YARASSAGQKKSFQRTDGDQR) is disordered. Tyr-110 carries the post-translational modification Sulfotyrosine. At Phe-116 the chain carries Phenylalanine amide. The propeptide occupies 120 to 128 (SAEEYEYSS).

It belongs to the gastrin/cholecystokinin family. In terms of processing, the precursor is cleaved by proteases to produce a number of active cholecystokinins. In terms of tissue distribution, brain and gastrointestinal tract.

It is found in the secreted. This is Cholecystokinin B (cck-b) from Xenopus laevis (African clawed frog).